Here is a 254-residue protein sequence, read N- to C-terminus: Chalcone isomerase cfoK (254 aa).

Catalysis depends on residues His33 and Tyr50.

The catalysed reaction is a chalcone = a flavanone.. It participates in secondary metabolite biosynthesis; flavonoid biosynthesis. Its function is as follows. Chalcone isomerase; part of the gene cluster that mediates the biosynthesis of chlorflavonin, a fungal flavonoid with acetolactate synthase inhibitory activity. Within the pathway, cfoK acts as chalcone isomerase (CHI), the key enzyme responsible for the tricyclic formation of flavanone through Michael-type intramolecular cyclization of chalcone. The hydrogen at C2'-OH is extracted by the imidazole ring of His-33, which induces the oxa-Michael addition to form the intermediate enolate through 6-endo-trig mode cyclization. The enolate can then be stabilized by a hydrogen bond with the Tyr-50 residue. Following enol tautomerization, the C ring, a gamma-pyranone ring, is formed. The pathway begins with the PKS-NRPS hybrid synthetase cfoA that uses benzoic acid or p-hydroxybenzoic acid as a starter unit with four rounds of chain elongation using malonyl-CoA to form the chalcone skeleton. Then, a new type of chalcone isomerase, cfoK, catalyzes the conversion of the chalcone into a flavanone by a histidine-mediated oxa-Michael addition mechanism. The desaturation of flavanone to flavone is catalyzed by a new type of flavone synthase, the flavin mononucleotide (FMN)-dependent oxidoreductase cfoJ. Monooxygenases cfoF, cfoG, and P450 cfoH are responsible for the hydroxylation of the flavonoid skeleton at sites C3, C8, and C2', respectively. Like cfoF, the dehydratase cfoI plays also a role in the hydroxylation of position C3. Methyltransferases cfoB, cfoC, and cfoD then catalyze the methylation of C7-OH, C8-OH, and C3-OH, respectively. Finally, the monooxygenase cfoE is responsible for the chlorination of flavonoid at position C3'. The sequence is that of Chalcone isomerase cfoK from Aspergillus candidus.